Reading from the N-terminus, the 185-residue chain is Ribosome-recycling factor (185 aa).

It belongs to the RRF family.

The protein localises to the cytoplasm. In terms of biological role, responsible for the release of ribosomes from messenger RNA at the termination of protein biosynthesis. May increase the efficiency of translation by recycling ribosomes from one round of translation to another. In Mycobacterium leprae (strain Br4923), this protein is Ribosome-recycling factor.